Reading from the N-terminus, the 162-residue chain is G/U mismatch-specific DNA glycosylase (162 aa).

It belongs to the uracil-DNA glycosylase (UDG) superfamily. TDG/mug family. In terms of assembly, binds DNA as a monomer.

The protein localises to the cytoplasm. It catalyses the reaction Specifically hydrolyzes mismatched double-stranded DNA and polynucleotides, releasing free uracil.. Functionally, excises ethenocytosine and uracil, which can arise by alkylation or deamination of cytosine, respectively, from the corresponding mispairs with guanine in ds-DNA. It is capable of hydrolyzing the carbon-nitrogen bond between the sugar-phosphate backbone of the DNA and the mispaired base. The complementary strand guanine functions in substrate recognition. Required for DNA damage lesion repair in stationary-phase cells. This is G/U mismatch-specific DNA glycosylase from Serratia marcescens.